The chain runs to 338 residues: Heat-inducible transcription repressor HrcA (338 aa).

Belongs to the HrcA family.

Functionally, negative regulator of class I heat shock genes (grpE-dnaK-dnaJ and groELS operons). Prevents heat-shock induction of these operons. This Nitrosomonas europaea (strain ATCC 19718 / CIP 103999 / KCTC 2705 / NBRC 14298) protein is Heat-inducible transcription repressor HrcA.